A 259-amino-acid chain; its full sequence is Proteasome subunit alpha (259 aa).

Residues 226-259 (LAEGSATSATSATPGEAEAPATAPEGDVDTGSNG) are disordered. Positions 227–250 (AEGSATSATSATPGEAEAPATAPE) are enriched in low complexity.

This sequence belongs to the peptidase T1A family. The 20S proteasome core is composed of 14 alpha and 14 beta subunits that assemble into four stacked heptameric rings, resulting in a barrel-shaped structure. The two inner rings, each composed of seven catalytic beta subunits, are sandwiched by two outer rings, each composed of seven alpha subunits. The catalytic chamber with the active sites is on the inside of the barrel. Has a gated structure, the ends of the cylinder being occluded by the N-termini of the alpha-subunits. Is capped by the proteasome-associated ATPase, ARC.

Its subcellular location is the cytoplasm. It participates in protein degradation; proteasomal Pup-dependent pathway. With respect to regulation, the formation of the proteasomal ATPase ARC-20S proteasome complex, likely via the docking of the C-termini of ARC into the intersubunit pockets in the alpha-rings, may trigger opening of the gate for substrate entry. Interconversion between the open-gate and close-gate conformations leads to a dynamic regulation of the 20S proteasome proteolysis activity. Its function is as follows. Component of the proteasome core, a large protease complex with broad specificity involved in protein degradation. The polypeptide is Proteasome subunit alpha (Streptosporangium roseum (strain ATCC 12428 / DSM 43021 / JCM 3005 / KCTC 9067 / NCIMB 10171 / NRRL 2505 / NI 9100)).